A 168-amino-acid polypeptide reads, in one-letter code: uncharacterized protein (168 aa).

In terms of domain architecture, N-acetyltransferase spans 7 to 168 (ERIDTLKTGD…TAKGWPDISM (162 aa)).

This is an uncharacterized protein from Azospirillum brasilense.